Consider the following 234-residue polypeptide: Large ribosomal subunit protein uL1 (234 aa).

This sequence belongs to the universal ribosomal protein uL1 family. Part of the 50S ribosomal subunit.

In terms of biological role, binds directly to 23S rRNA. The L1 stalk is quite mobile in the ribosome, and is involved in E site tRNA release. Its function is as follows. Protein L1 is also a translational repressor protein, it controls the translation of the L11 operon by binding to its mRNA. The polypeptide is Large ribosomal subunit protein uL1 (Klebsiella pneumoniae subsp. pneumoniae (strain ATCC 700721 / MGH 78578)).